A 27-amino-acid chain; its full sequence is Caerulein precursor fragment R5 (27 aa).

In terms of tissue distribution, expressed by the skin glands.

It localises to the secreted. In terms of biological role, antimicrobial peptide. The sequence is that of Caerulein precursor fragment R5 from Xenopus ruwenzoriensis (Uganda clawed frog).